We begin with the raw amino-acid sequence, 754 residues long: 5-methyltetrahydropteroyltriglutamate--homocysteine methyltransferase (754 aa).

Residues 15–18 (RELK) and K114 contribute to the 5-methyltetrahydropteroyltri-L-glutamate site. L-homocysteine is bound by residues 430–432 (IGS) and E483. L-methionine contacts are provided by residues 430–432 (IGS) and E483. 5-methyltetrahydropteroyltri-L-glutamate is bound by residues 514–515 (RC) and W560. An L-homocysteine-binding site is contributed by D598. D598 is a binding site for L-methionine. E604 contributes to the 5-methyltetrahydropteroyltri-L-glutamate binding site. 3 residues coordinate Zn(2+): H641, C643, and E665. The active-site Proton donor is H694. C726 contributes to the Zn(2+) binding site.

Belongs to the vitamin-B12 independent methionine synthase family. The cofactor is Zn(2+).

The enzyme catalyses 5-methyltetrahydropteroyltri-L-glutamate + L-homocysteine = tetrahydropteroyltri-L-glutamate + L-methionine. Its pathway is amino-acid biosynthesis; L-methionine biosynthesis via de novo pathway; L-methionine from L-homocysteine (MetE route): step 1/1. In terms of biological role, catalyzes the transfer of a methyl group from 5-methyltetrahydrofolate to homocysteine resulting in methionine formation. The protein is 5-methyltetrahydropteroyltriglutamate--homocysteine methyltransferase of Campylobacter jejuni (strain RM1221).